We begin with the raw amino-acid sequence, 187 residues long: 2-oxoglutarate synthase subunit KorC (187 aa).

Heterotetramer of the KorA, KorB, KorC and KorD subunits.

It carries out the reaction 2 oxidized [2Fe-2S]-[ferredoxin] + 2-oxoglutarate + CoA = succinyl-CoA + 2 reduced [2Fe-2S]-[ferredoxin] + CO2 + H(+). This Methanocaldococcus jannaschii (strain ATCC 43067 / DSM 2661 / JAL-1 / JCM 10045 / NBRC 100440) (Methanococcus jannaschii) protein is 2-oxoglutarate synthase subunit KorC (korC).